A 35-amino-acid polypeptide reads, in one-letter code: Photosystem II reaction center protein Psb30 (35 aa).

A helical membrane pass occupies residues 7–27 (VFVQLLLLALIVLAGPAVILL).

Belongs to the Psb30/Ycf12 family. As to quaternary structure, PSII is composed of 1 copy each of membrane proteins PsbA, PsbB, PsbC, PsbD, PsbE, PsbF, PsbH, PsbI, PsbJ, PsbK, PsbL, PsbM, PsbT, PsbX, PsbY, PsbZ, Psb30/Ycf12, peripheral proteins PsbO, CyanoQ (PsbQ), PsbU, PsbV and a large number of cofactors. It forms dimeric complexes.

It is found in the cellular thylakoid membrane. In terms of biological role, a core subunit of photosystem II (PSII), probably helps stabilize the reaction center. The sequence is that of Photosystem II reaction center protein Psb30 from Synechococcus sp. (strain JA-3-3Ab) (Cyanobacteria bacterium Yellowstone A-Prime).